Reading from the N-terminus, the 170-residue chain is Urease accessory protein UreE (170 aa).

The protein belongs to the UreE family.

Its subcellular location is the cytoplasm. Its function is as follows. Involved in urease metallocenter assembly. Binds nickel. Probably functions as a nickel donor during metallocenter assembly. The protein is Urease accessory protein UreE of Helicobacter pylori (strain P12).